Consider the following 412-residue polypeptide: Adenylosuccinate synthetase (412 aa).

Residues glycine 12 to lysine 18 and glycine 40 to glutamate 42 each bind GTP. Catalysis depends on aspartate 13, which acts as the Proton acceptor. Residues aspartate 13 and glycine 40 each coordinate Mg(2+). Residues aspartate 13 to lysine 16, asparagine 38 to histidine 41, arginine 134, asparagine 212, threonine 227, and arginine 291 each bind IMP. The active-site Proton donor is histidine 41. Substrate is bound at residue threonine 287 to arginine 293. Residues arginine 293, lysine 318 to aspartate 320, and glycine 400 to glycine 402 each bind GTP.

Belongs to the adenylosuccinate synthetase family. In terms of assembly, homodimer. It depends on Mg(2+) as a cofactor.

The protein resides in the cytoplasm. The catalysed reaction is IMP + L-aspartate + GTP = N(6)-(1,2-dicarboxyethyl)-AMP + GDP + phosphate + 2 H(+). Its pathway is purine metabolism; AMP biosynthesis via de novo pathway; AMP from IMP: step 1/2. In terms of biological role, plays an important role in the de novo pathway and in the salvage pathway of purine nucleotide biosynthesis. Catalyzes the first committed step in the biosynthesis of AMP from IMP. The chain is Adenylosuccinate synthetase from Fusarium vanettenii (strain ATCC MYA-4622 / CBS 123669 / FGSC 9596 / NRRL 45880 / 77-13-4) (Fusarium solani subsp. pisi).